A 299-amino-acid polypeptide reads, in one-letter code: Phosphatidylinositol-3-phosphatase (299 aa).

Positions 1-43 are cleaved as a signal peptide; the sequence is MLRGIQALSRPLTRVYRALAVIGVLAASLLASWVGAVPQVGLA.

Monomer. SapM interacts with host RAB7 via its C-terminus. It depends on a metal cation as a cofactor.

Its subcellular location is the secreted. The protein localises to the host cytoplasmic vesicle. It is found in the host phagosome. The enzyme catalyses a phosphate monoester + H2O = an alcohol + phosphate. It catalyses the reaction a 1,2-diacyl-sn-glycero-3-phospho-(1D-myo-inositol-3-phosphate) + H2O = a 1,2-diacyl-sn-glycero-3-phospho-(1D-myo-inositol) + phosphate. With respect to regulation, phosphatase activity is inhibited in vitro by low concentrations of several heavy metals (zinc chloride, sodium molybdate, magnesium chloride, and copper sulfate) and moderately high concentrations (&gt;8 mM) of EDTA. Its function is as follows. Virulence factor that plays an important role in blocking phagosome-lysosome fusion and thus participates in the intracellular survival of the pathogen. Acts as a phosphatase that dephosphorylates phosphatidylinositol 3-phosphate (PI3P), a membrane trafficking regulatory lipid essential for phagosomal acquisition of lysosomal constituents. Therefore, SapM eliminates PI3P from the phagosomal membrane by catalyzing its hydrolysis, and thus contributes to inhibition of phagosome maturation. Also interferes with autophagy: SapM blocks autophagosome-lysosome fusion in macrophages by binding to the small GTPase RAB7, which prevents RAB7 from being involved in this process and thus negatively regulates autophagy flux. In vitro, displays phosphatase activity with broad specificity; can dephosphorylate a variety of phosphoester substrates, with the highest activity against phosphoenolpyruvate, glycerophosphate, GTP, NADPH, phosphotyrosine and trehalose-6-phosphate. In contrast, the enzyme exhibits poor activity against glucose-6-phosphate, phosphothreonine, and a number of nucleotides (NADP, ATP, AMP, and GMP). The protein is Phosphatidylinositol-3-phosphatase of Mycobacterium tuberculosis (strain ATCC 25618 / H37Rv).